The primary structure comprises 500 residues: Glycerol kinase (500 aa).

An ADP-binding site is contributed by Thr13. The ATP site is built by Thr13, Thr14, and Ser15. Thr13 contributes to the sn-glycerol 3-phosphate binding site. Arg17 lines the ADP pocket. Sn-glycerol 3-phosphate contacts are provided by Arg83, Glu84, Tyr135, and Asp244. The glycerol site is built by Arg83, Glu84, Tyr135, Asp244, and Gln245. ADP is bound by residues Thr266, Gly309, Gly410, and Asn414. Positions 266, 309, and 410 each coordinate ATP.

It belongs to the FGGY kinase family.

The catalysed reaction is glycerol + ATP = sn-glycerol 3-phosphate + ADP + H(+). The protein operates within polyol metabolism; glycerol degradation via glycerol kinase pathway; sn-glycerol 3-phosphate from glycerol: step 1/1. Inhibited by fructose 1,6-bisphosphate (FBP). In terms of biological role, key enzyme in the regulation of glycerol uptake and metabolism. Catalyzes the phosphorylation of glycerol to yield sn-glycerol 3-phosphate. This is Glycerol kinase from Chromobacterium violaceum (strain ATCC 12472 / DSM 30191 / JCM 1249 / CCUG 213 / NBRC 12614 / NCIMB 9131 / NCTC 9757 / MK).